Consider the following 131-residue polypeptide: UPF0102 protein YraN (131 aa).

Positions 1–19 (MATVPTRSGSPRQLTTKQT) are enriched in polar residues. The interval 1–21 (MATVPTRSGSPRQLTTKQTGD) is disordered.

It belongs to the UPF0102 family.

The protein is UPF0102 protein YraN of Escherichia coli O7:K1 (strain IAI39 / ExPEC).